Consider the following 474-residue polypeptide: tRNA-2-methylthio-N(6)-dimethylallyladenosine synthase (474 aa).

An MTTase N-terminal domain is found at 3–120 (KKLHIKTWGC…LPEMIEQVRR (118 aa)). 6 residues coordinate [4Fe-4S] cluster: cysteine 12, cysteine 49, cysteine 83, cysteine 157, cysteine 161, and cysteine 164. Residues 143–375 (RAEGPTAFVS…QDRITQQAMR (233 aa)) enclose the Radical SAM core domain. Residues 378-441 (RHMMGTVQRI…TNSLRGVFIR (64 aa)) enclose the TRAM domain.

This sequence belongs to the methylthiotransferase family. MiaB subfamily. As to quaternary structure, monomer. Requires [4Fe-4S] cluster as cofactor.

The protein resides in the cytoplasm. The catalysed reaction is N(6)-dimethylallyladenosine(37) in tRNA + (sulfur carrier)-SH + AH2 + 2 S-adenosyl-L-methionine = 2-methylsulfanyl-N(6)-dimethylallyladenosine(37) in tRNA + (sulfur carrier)-H + 5'-deoxyadenosine + L-methionine + A + S-adenosyl-L-homocysteine + 2 H(+). Functionally, catalyzes the methylthiolation of N6-(dimethylallyl)adenosine (i(6)A), leading to the formation of 2-methylthio-N6-(dimethylallyl)adenosine (ms(2)i(6)A) at position 37 in tRNAs that read codons beginning with uridine. The protein is tRNA-2-methylthio-N(6)-dimethylallyladenosine synthase of Shewanella baltica (strain OS155 / ATCC BAA-1091).